A 295-amino-acid chain; its full sequence is Small ribosomal subunit protein uS2 (295 aa).

N-acetylserine is present on Ser-2. Ser-43 is modified (phosphoserine). At Lys-52 the chain carries N6-acetyllysine. Residues Thr-54–Gln-113 are interaction with PPP1R16B. Lys-89 bears the N6-acetyllysine; alternate mark. Residue Lys-89 forms a Glycyl lysine isopeptide (Lys-Gly) (interchain with G-Cter in SUMO2); alternate linkage. Thr-97 is modified (phosphothreonine). Laminin-binding regions lie at residues Ile-161–Arg-180 and Arg-205–Gly-229. Residues Glu-214 to Phe-227 show a composition bias toward basic and acidic residues. The disordered stretch occupies residues Glu-214 to Ala-240. 4 [DE]-W-[ST] repeats span residues Glu-230–Thr-232, Asp-247–Ser-249, Asp-266–Ser-268, and Asp-275–Ser-277. A laminin-binding region spans residues Gln-242–Ser-295. The segment at Pro-263–Ser-295 is disordered. Polar residues predominate over residues Pro-280–Ser-295.

Belongs to the universal ribosomal protein uS2 family. Monomer (37LRP) and homodimer (67LR). Component of the small ribosomal subunit. Mature ribosomes consist of a small (40S) and a large (60S) subunit. The 40S subunit contains about 33 different proteins and 1 molecule of RNA (18S). The 60S subunit contains about 49 different proteins and 3 molecules of RNA (28S, 5.8S and 5S). Interacts with RPS21. Interacts with several laminins including at least LAMB1. Interacts with MDK. The mature dimeric form interacts with PPP1R16B (via its fourth ankyrin repeat). Interacts with PPP1CA only in the presence of PPP1R16B. In terms of processing, acylated. Acylation may be a prerequisite for conversion of the monomeric 37 kDa laminin receptor precursor (37LRP) to the mature dimeric 67 kDa laminin receptor (67LR), and may provide a mechanism for membrane association. Cleaved by stromelysin-3 (ST3) at the cell surface. Cleavage by stromelysin-3 may be a mechanism to alter cell-extracellular matrix interactions.

Its subcellular location is the cell membrane. It localises to the cytoplasm. The protein localises to the nucleus. In terms of biological role, required for the assembly and/or stability of the 40S ribosomal subunit. Required for the processing of the 20S rRNA-precursor to mature 18S rRNA in a late step of the maturation of 40S ribosomal subunits. Also functions as a cell surface receptor for laminin. Plays a role in cell adhesion to the basement membrane and in the consequent activation of signaling transduction pathways. May play a role in cell fate determination and tissue morphogenesis. Also acts as a receptor for several other ligands, including the pathogenic prion protein, viruses, and bacteria. Acts as a PPP1R16B-dependent substrate of PPP1CA. The polypeptide is Small ribosomal subunit protein uS2 (Ovis aries (Sheep)).